Reading from the N-terminus, the 402-residue chain is FMN-dependent alpha-hydroxy acid dehydrogenase qulF (402 aa).

Residues 22–394 enclose the FMN hydroxy acid dehydrogenase domain; it reads RLPAITTNPT…NRDCMRRISY (373 aa). Residue tyrosine 48 coordinates a 2-oxocarboxylate. FMN contacts are provided by serine 130 and glutamine 152. The a 2-oxocarboxylate site is built by tyrosine 154 and arginine 189. Residue lysine 265 participates in FMN binding. The active-site Proton acceptor is histidine 289. An a 2-oxocarboxylate-binding site is contributed by arginine 292. FMN-binding positions include 320–324 and 343–344; these read DSGVR and GR.

It belongs to the FMN-dependent alpha-hydroxy acid dehydrogenase family. FMN is required as a cofactor.

FMN-dependent alpha-hydroxy acid dehydrogenase; part of the gene cluster that mediates the biosynthesis of quinolactacin A2 (QUL A2), a fungal alkaloid that features a quinolone-gamma-lactam hybrid, which is a potential pharmacophore for the treatment of cancer and Alzheimer's disease. The quinolone-gamma-lactam hybrid scaffold is synthesized from the combination of L-isoleucine (L-Ile) and the nonproteinogenic amino acid L-kynurenine, followed by quinolone cyclization, oxidative decarboxylation, and lactam formation. Additionally, the N-methyl group is derived from methionine, which might be catalyzed by an S-adenosylmethionine (SAM)-dependent methyltransferase. Bioconversion of L-tryptophan to L-kynurenine could be catalyzed by the indoleamine-2,3-dioxygenase (IDO) qulI to produce an unstable product, N-formyl-L-kynurenine, followed by kynurenine formamidase catalyzed hydrolysis. QulM then acts as a methyltransferase that methylates L-kynurenine at the N-4 position. The FMN-dependent alpha-hydroxy acid dehydrogenase qulF than functions as an oxidative decarboxylase which converts N-methylkynurenine into 2-aminobenzoylacetamide via 2 tandem reactions, including dehydrogenation and decarboxylation. An amidase located outside of the qul gene cluster further produces the unstable beta-keto acid precursor N-methyl-2-aminobenzoylacetate, which could be spontaneously dehydrated to form N-methyl-4-hydroxy-2-quinolone. The NRPS qulB is able to incorporate N-methyl-2-aminobenzoylacetate and efficiently compete with the spontaneous reaction. By further extending the beta-keto acid with L-Ile, qulA performs a Dieckmann condensation to form the gamma-lactam ring and release a 4-ketopyrrolidinone intermediate from the assembly line. This intermediate could plausibly further undergo a spontaneous cyclization to yield the final quinolone-gamma-lactam hybrid structure. This chain is FMN-dependent alpha-hydroxy acid dehydrogenase qulF, found in Penicillium citrinum.